The chain runs to 254 residues: Isoprenyl transferase (254 aa).

Asp12 is a catalytic residue. Asp12 contacts Mg(2+). Substrate-binding positions include 13–16 (GNGR), Trp17, Arg25, His29, and 57–59 (SSE). The active-site Proton acceptor is Asn60. Residues Trp61, Arg63, Arg180, and 186 to 188 (RLS) each bind substrate. Glu199 serves as a coordination point for Mg(2+).

It belongs to the UPP synthase family. In terms of assembly, homodimer. Mg(2+) is required as a cofactor.

Functionally, catalyzes the condensation of isopentenyl diphosphate (IPP) with allylic pyrophosphates generating different type of terpenoids. This chain is Isoprenyl transferase, found in Brucella suis biovar 1 (strain 1330).